The following is a 310-amino-acid chain: p-hydroxybenzoic acid efflux pump subunit AaeA (310 aa).

A helical transmembrane segment spans residues 12–32 (AITVILVILAFVAIFRAWVYY).

Belongs to the membrane fusion protein (MFP) (TC 8.A.1) family.

It is found in the cell inner membrane. Functionally, forms an efflux pump with AaeB. In Klebsiella pneumoniae (strain 342), this protein is p-hydroxybenzoic acid efflux pump subunit AaeA.